The chain runs to 247 residues: MDNFFLGLSCQEENNFWDLIVADISGDRSVSVPIRSAFRSYMKDTELRMMSPKISSSKVNVKKRMVNLLRKNWEEKKNTVAPEKERSRRHMLKERTRREKQKQSYLALHSLLPFATKNDKNSIVEKAVDEIAKLQRLKKELVRRIKVIEEKSAKDGHDEMSETKVRVNLKEPLSGLDSMLEALHYLKSMGTKLKTVHANFSPQEFSATMTIETQIRGEEVEKRVERRLQETEWKLLFLPEASFYKDY.

One can recognise a bHLH domain in the interval 85 to 134; the sequence is ERSRRHMLKERTRREKQKQSYLALHSLLPFATKNDKNSIVEKAVDEIAKL.

Homodimer.

It localises to the nucleus. The protein is Transcription factor bHLH92 (BHLH92) of Arabidopsis thaliana (Mouse-ear cress).